The following is a 270-amino-acid chain: uncharacterized protein (270 aa).

An N-terminal signal peptide occupies residues 1–23 (MFNFITFILFAVVCISYCHKSRG). N-linked (GlcNAc...) asparagine glycans are attached at residues asparagine 246 and asparagine 252.

It localises to the secreted. This is an uncharacterized protein from Caenorhabditis elegans.